The chain runs to 591 residues: NADP-dependent malic enzyme (591 aa).

The Proton donor role is filled by Tyr-139. Residue Arg-192 participates in NAD(+) binding. The active-site Proton acceptor is Lys-210. Glu-282, Asp-283, and Asp-306 together coordinate a divalent metal cation. Position 306 (Asp-306) interacts with NAD(+). 335 to 351 (LFLGAGEAGTGIAELIA) contributes to the NADP(+) binding site. Residue Asn-447 coordinates NAD(+).

It belongs to the malic enzymes family. In terms of assembly, homotetramer. The cofactor is Mg(2+). Requires Mn(2+) as cofactor.

The protein localises to the cytoplasm. It carries out the reaction (S)-malate + NADP(+) = pyruvate + CO2 + NADPH. The enzyme catalyses oxaloacetate + H(+) = pyruvate + CO2. The polypeptide is NADP-dependent malic enzyme (Vitis vinifera (Grape)).